A 236-amino-acid chain; its full sequence is Mitochondrial inner membrane protease ATP23 (236 aa).

A divalent metal cation is bound at residue histidine 136. Residue glutamate 137 is part of the active site. Position 140 (histidine 140) interacts with a divalent metal cation.

Belongs to the peptidase M76 family.

It localises to the mitochondrion inner membrane. Its function is as follows. Has a dual role in the assembly of mitochondrial ATPase. Acts as a protease that removes N-terminal residues of mitochondrial ATPase CF(0) subunit 6 at the intermembrane space side. Also involved in the correct assembly of the membrane-embedded ATPase CF(0) particle, probably mediating association of subunit 6 with the subunit 9 ring. This Debaryomyces hansenii (strain ATCC 36239 / CBS 767 / BCRC 21394 / JCM 1990 / NBRC 0083 / IGC 2968) (Yeast) protein is Mitochondrial inner membrane protease ATP23 (ATP23).